The chain runs to 185 residues: ATP-dependent protease subunit HslV (185 aa).

Residue threonine 2 is part of the active site. The Na(+) site is built by glycine 157, cysteine 160, and threonine 163.

Belongs to the peptidase T1B family. HslV subfamily. A double ring-shaped homohexamer of HslV is capped on each side by a ring-shaped HslU homohexamer. The assembly of the HslU/HslV complex is dependent on binding of ATP.

Its subcellular location is the cytoplasm. It carries out the reaction ATP-dependent cleavage of peptide bonds with broad specificity.. Its activity is regulated as follows. Allosterically activated by HslU binding. Functionally, protease subunit of a proteasome-like degradation complex believed to be a general protein degrading machinery. The chain is ATP-dependent protease subunit HslV from Vibrio cholerae serotype O1 (strain ATCC 39315 / El Tor Inaba N16961).